Here is a 290-residue protein sequence, read N- to C-terminus: Porphobilinogen deaminase (290 aa).

At C237 the chain carries S-(dipyrrolylmethanemethyl)cysteine.

This sequence belongs to the HMBS family. As to quaternary structure, monomer. The cofactor is dipyrromethane.

It catalyses the reaction 4 porphobilinogen + H2O = hydroxymethylbilane + 4 NH4(+). It participates in porphyrin-containing compound metabolism; protoporphyrin-IX biosynthesis; coproporphyrinogen-III from 5-aminolevulinate: step 2/4. Its function is as follows. Tetrapolymerization of the monopyrrole PBG into the hydroxymethylbilane pre-uroporphyrinogen in several discrete steps. In Clostridium botulinum (strain Kyoto / Type A2), this protein is Porphobilinogen deaminase.